The sequence spans 301 residues: WD repeat-containing protein SL1-17 (301 aa).

WD repeat units follow at residues alanine 11 to leucine 54, glycine 59 to threonine 98, glycine 101 to serine 140, leucine 143 to leucine 182, glycine 184 to proline 223, glycine 227 to cysteine 266, and threonine 269 to cysteine 300.

The polypeptide is WD repeat-containing protein SL1-17 (Schistosoma mansoni (Blood fluke)).